We begin with the raw amino-acid sequence, 178 residues long: Epididymal-specific lipocalin-9 (178 aa).

Positions 1–16 (MVLLLVLGLVLSLATA) are cleaved as a signal peptide. N46, N68, and N129 each carry an N-linked (GlcNAc...) asparagine glycan. C83 and C176 form a disulfide bridge.

It belongs to the calycin superfamily. Lipocalin family. Expressed in epididymis. Not detected in all other tissues tested.

Its subcellular location is the secreted. In Mus musculus (Mouse), this protein is Epididymal-specific lipocalin-9 (Lcn9).